Consider the following 401-residue polypeptide: Argininosuccinate synthase (401 aa).

9–17 provides a ligand contact to ATP; that stretch reads AYSGGLDTS. Tyrosine 86 provides a ligand contact to L-citrulline. Glycine 116 contributes to the ATP binding site. L-aspartate is bound by residues threonine 118, asparagine 122, and aspartate 123. Asparagine 122 contacts L-citrulline. L-citrulline is bound by residues arginine 126, serine 174, serine 183, glutamate 259, and tyrosine 271.

This sequence belongs to the argininosuccinate synthase family. Type 1 subfamily. In terms of assembly, homotetramer.

The protein resides in the cytoplasm. The enzyme catalyses L-citrulline + L-aspartate + ATP = 2-(N(omega)-L-arginino)succinate + AMP + diphosphate + H(+). It functions in the pathway amino-acid biosynthesis; L-arginine biosynthesis; L-arginine from L-ornithine and carbamoyl phosphate: step 2/3. In Bacillus thuringiensis subsp. konkukian (strain 97-27), this protein is Argininosuccinate synthase.